A 243-amino-acid chain; its full sequence is MYQWIQRDSDVHQRWIWCRRLLIVSLVSALMSVLQVIVFRFVDPPLSMTMVGRYLEAWSDRQWNFRLHYVWCDLEQIAPSVPISLVAAEDQRFPFHHGFDFDAIKKALGRHSRGGHLRGASTISQQVAKNLFLWSGRSFVRKGLEGWYTFWIELFWPKRRILEIYANIAEFGDGVYGVQAAARRYLGKGAADLDESDAAQLAAVLPSPRHYNIQHPGPYIRWRSSWIQRQAKQLGGSAYLDMH.

The helical transmembrane segment at 21 to 43 (LLIVSLVSALMSVLQVIVFRFVD) threads the bilayer.

Belongs to the glycosyltransferase 51 family.

It localises to the cell inner membrane. The enzyme catalyses [GlcNAc-(1-&gt;4)-Mur2Ac(oyl-L-Ala-gamma-D-Glu-L-Lys-D-Ala-D-Ala)](n)-di-trans,octa-cis-undecaprenyl diphosphate + beta-D-GlcNAc-(1-&gt;4)-Mur2Ac(oyl-L-Ala-gamma-D-Glu-L-Lys-D-Ala-D-Ala)-di-trans,octa-cis-undecaprenyl diphosphate = [GlcNAc-(1-&gt;4)-Mur2Ac(oyl-L-Ala-gamma-D-Glu-L-Lys-D-Ala-D-Ala)](n+1)-di-trans,octa-cis-undecaprenyl diphosphate + di-trans,octa-cis-undecaprenyl diphosphate + H(+). It functions in the pathway cell wall biogenesis; peptidoglycan biosynthesis. Its function is as follows. Peptidoglycan polymerase that catalyzes glycan chain elongation from lipid-linked precursors. This Xylella fastidiosa (strain Temecula1 / ATCC 700964) protein is Biosynthetic peptidoglycan transglycosylase.